A 293-amino-acid chain; its full sequence is Formamidopyrimidine-DNA glycosylase (293 aa).

Pro-2 serves as the catalytic Schiff-base intermediate with DNA. Catalysis depends on Glu-3, which acts as the Proton donor. Catalysis depends on Lys-61, which acts as the Proton donor; for beta-elimination activity. His-104, Arg-123, and Lys-169 together coordinate DNA. The FPG-type zinc-finger motif lies at 255 to 289 (DAYGREGEPCRRCGAIMRRDKFMNRSSFYCPRCQP). Arg-279 functions as the Proton donor; for delta-elimination activity in the catalytic mechanism.

This sequence belongs to the FPG family. Monomer. Zn(2+) is required as a cofactor.

The enzyme catalyses Hydrolysis of DNA containing ring-opened 7-methylguanine residues, releasing 2,6-diamino-4-hydroxy-5-(N-methyl)formamidopyrimidine.. It catalyses the reaction 2'-deoxyribonucleotide-(2'-deoxyribose 5'-phosphate)-2'-deoxyribonucleotide-DNA = a 3'-end 2'-deoxyribonucleotide-(2,3-dehydro-2,3-deoxyribose 5'-phosphate)-DNA + a 5'-end 5'-phospho-2'-deoxyribonucleoside-DNA + H(+). Its function is as follows. Involved in base excision repair of DNA damaged by oxidation or by mutagenic agents. Acts as a DNA glycosylase that recognizes and removes damaged bases. Has a preference for oxidized purines, such as 7,8-dihydro-8-oxoguanine (8-oxoG). Has AP (apurinic/apyrimidinic) lyase activity and introduces nicks in the DNA strand. Cleaves the DNA backbone by beta-delta elimination to generate a single-strand break at the site of the removed base with both 3'- and 5'-phosphates. The sequence is that of Formamidopyrimidine-DNA glycosylase from Mycolicibacterium vanbaalenii (strain DSM 7251 / JCM 13017 / BCRC 16820 / KCTC 9966 / NRRL B-24157 / PYR-1) (Mycobacterium vanbaalenii).